A 507-amino-acid chain; its full sequence is GMP synthase [glutamine-hydrolyzing] (507 aa).

A Glutamine amidotransferase type-1 domain is found at 3-190 (KILVIDYGSQ…IQGICGLKGS (188 aa)). Cys77 acts as the Nucleophile in catalysis. Active-site residues include His164 and Glu166. Residues 191-382 (WTLMDFVENK…LGLPREILYR (192 aa)) form the GMPS ATP-PPase domain. Residue 218–224 (SGGVDSS) coordinates ATP.

In terms of assembly, homodimer.

It catalyses the reaction XMP + L-glutamine + ATP + H2O = GMP + L-glutamate + AMP + diphosphate + 2 H(+). It participates in purine metabolism; GMP biosynthesis; GMP from XMP (L-Gln route): step 1/1. Functionally, catalyzes the synthesis of GMP from XMP. The sequence is that of GMP synthase [glutamine-hydrolyzing] from Petrotoga mobilis (strain DSM 10674 / SJ95).